We begin with the raw amino-acid sequence, 318 residues long: Guanidinopropionase (318 aa).

Mn(2+)-binding residues include H126, D148, H150, D152, D240, and D242.

It belongs to the arginase family. Agmatinase subfamily. In terms of assembly, homohexamer. Mn(2+) serves as cofactor.

The catalysed reaction is 3-guanidinopropanoate + H2O = urea + beta-alanine. In terms of biological role, catalyzes the hydrolysis of 3-guanidinopropanoate to beta-alanine and urea. Possesses low activity against 4-guanidinobutanoate. Has no activity against arginine and agmatine. The protein is Guanidinopropionase (gpuA) of Pseudomonas aeruginosa (strain ATCC 15692 / DSM 22644 / CIP 104116 / JCM 14847 / LMG 12228 / 1C / PRS 101 / PAO1).